Reading from the N-terminus, the 120-residue chain is NAD(P)H-quinone oxidoreductase subunit 3, chloroplastic (120 aa).

3 consecutive transmembrane segments (helical) span residues 9–29 (IFWA…LISG), 64–84 (MFAL…PWAM), and 88–108 (VLGV…ILGL).

This sequence belongs to the complex I subunit 3 family. NDH is composed of at least 16 different subunits, 5 of which are encoded in the nucleus.

It is found in the plastid. The protein resides in the chloroplast thylakoid membrane. It carries out the reaction a plastoquinone + NADH + (n+1) H(+)(in) = a plastoquinol + NAD(+) + n H(+)(out). It catalyses the reaction a plastoquinone + NADPH + (n+1) H(+)(in) = a plastoquinol + NADP(+) + n H(+)(out). In terms of biological role, NDH shuttles electrons from NAD(P)H:plastoquinone, via FMN and iron-sulfur (Fe-S) centers, to quinones in the photosynthetic chain and possibly in a chloroplast respiratory chain. The immediate electron acceptor for the enzyme in this species is believed to be plastoquinone. Couples the redox reaction to proton translocation, and thus conserves the redox energy in a proton gradient. The polypeptide is NAD(P)H-quinone oxidoreductase subunit 3, chloroplastic (Capsella bursa-pastoris (Shepherd's purse)).